We begin with the raw amino-acid sequence, 238 residues long: Glutamine amidotransferase-like protein chyE (238 aa).

The Glutamine amidotransferase type-1 domain maps to 8-238 (KIAVLINTPP…LERVLQWLSE (231 aa)). The active-site Nucleophile is the C102. Residues H189 and E191 contribute to the active site.

This sequence belongs to the peptidase C26 family.

It participates in pigment biosynthesis. In terms of biological role, glutamine amidotransferase-like protein; part of the gene cluster that mediates the biosynthesis of the yellow pigment chrysogine. the NRPS chyA mediates the condensation of anthranilic acid and alanine into the intermediate 2-(2-aminopropanamido)benzoic acid. The remainder of the pathway is highly branched yielding at least 13 chrysogine-related compounds. The malonyl transferase chyE converts 2-(2-aminopropanamido)benzoic acid and 2-(2-aminopropanamido)benzamidine into 2-(2-(2-carboxyacetamido)propanamido)benzoic acid and 3-((1-((2-carbamoylphenyl)amino)-1-oxopropan-2-yl)amino)-3-oxopropanoic acid, respectively. ChyD is an amidase, being responsible for the amidation of the carboxylic acid moiety of 2-(2-aminopropanamido)benzoic acid, 2-(2-(2-carboxyacetamido)propanamido)benzoic acid and 2-(2-((4-amino-1-carboxy-4-oxobutyl)amino)propanamido)benzoic acid. ChyC is involved in the same reactions as ChyD, but plays a more minor role in the amidation reactions compared to chyD. The oxidoreductases chyH and chyM are involved in oxidation reactions that form N-pyruvoylanthranilamide from 2-(2-aminopropanamido)benzamidine and (1-((2-carbamoylphenyl)amino)-1-oxopropan-2-yl)glutamine, respectively. N-pyruvoylanthranilamide is further converted via two further branches in the pathway, yielding chrysogine and additional chrysogine-related coumpounds. Chrysogine is likely formed by a spontaneous ring closure from N-pyruvoylanthranilamide. The sequence is that of Glutamine amidotransferase-like protein chyE from Penicillium rubens (strain ATCC 28089 / DSM 1075 / NRRL 1951 / Wisconsin 54-1255) (Penicillium chrysogenum).